The sequence spans 181 residues: Ribosome maturation factor RimM (181 aa).

The region spanning 98-172 (EDEFYFEDLI…RIVIPELSLW (75 aa)) is the PRC barrel domain.

The protein belongs to the RimM family. As to quaternary structure, binds ribosomal protein uS19.

It is found in the cytoplasm. Functionally, an accessory protein needed during the final step in the assembly of 30S ribosomal subunit, possibly for assembly of the head region. Essential for efficient processing of 16S rRNA. May be needed both before and after RbfA during the maturation of 16S rRNA. It has affinity for free ribosomal 30S subunits but not for 70S ribosomes. This Hyphomonas neptunium (strain ATCC 15444) protein is Ribosome maturation factor RimM.